Here is a 334-residue protein sequence, read N- to C-terminus: D-alanine--D-alanine ligase (334 aa).

In terms of domain architecture, ATP-grasp spans 114-314 (KRIWRFEGLP…YEELCLRILA (201 aa)). 140–195 (LEDLGSPMIVKPSREGSTIGLTKVTSPGQCEQAYRLASRYDPEVLCEQFIEGEETT) serves as a coordination point for ATP. Residues Asp-267, Glu-281, and Asn-283 each contribute to the Mg(2+) site.

The protein belongs to the D-alanine--D-alanine ligase family. Mg(2+) is required as a cofactor. Mn(2+) serves as cofactor.

The protein localises to the cytoplasm. The enzyme catalyses 2 D-alanine + ATP = D-alanyl-D-alanine + ADP + phosphate + H(+). It participates in cell wall biogenesis; peptidoglycan biosynthesis. Functionally, cell wall formation. This is D-alanine--D-alanine ligase from Paracidovorax citrulli (strain AAC00-1) (Acidovorax citrulli).